Reading from the N-terminus, the 55-residue chain is Ferredoxin-1 (55 aa).

4Fe-4S ferredoxin-type domains are found at residues 2 to 27 (YKIE…EQGD) and 28 to 55 (TIFV…PVAE). The [4Fe-4S] cluster site is built by cysteine 8, cysteine 11, cysteine 14, cysteine 18, cysteine 37, cysteine 40, cysteine 43, and cysteine 47.

Requires [4Fe-4S] cluster as cofactor.

In terms of biological role, ferredoxins are iron-sulfur proteins that transfer electrons in a wide variety of metabolic reactions. The protein is Ferredoxin-1 of Rhodospirillum rubrum.